Consider the following 96-residue polypeptide: Putative pterin-4-alpha-carbinolamine dehydratase (96 aa).

The protein belongs to the pterin-4-alpha-carbinolamine dehydratase family.

It carries out the reaction (4aS,6R)-4a-hydroxy-L-erythro-5,6,7,8-tetrahydrobiopterin = (6R)-L-erythro-6,7-dihydrobiopterin + H2O. The chain is Putative pterin-4-alpha-carbinolamine dehydratase from Prochlorococcus marinus (strain MIT 9301).